A 62-amino-acid chain; its full sequence is uncharacterized protein (62 aa).

This is an uncharacterized protein from Acidianus filamentous virus 2 (isolate Italy/Pozzuoli) (AFV-2).